The chain runs to 445 residues: MSETTLNAAEQPIDELVSWVKQHDFSLNLTTERLAFLIAIAVLSNERFDEELGEGELHDAFTIVTRLFEETGEASAFRANNAINELVKQRLISRFTSEMTEGASIYRLSPLAIGITDYYVRHREFSKLRLSIQLSMVAGEMAKAIEAAKQGGTAGHWKKNVYAVLKYSVGEIFDQIDLNQRVMDEQQQSVKQQIADLLNKDWREAINNCESLLSETSNTLKELQDTLQAAGDELQTQILDIQELVYGDEELEFIEETLFGLQMKLDRITSWGQQAIDLWIGYDRHVHKFIRTAIDMDKNRIFSTRLRQSVKDYFDMPWYLTYADAERLSDLRDEALVLRDDEVTGQVPLEVEYEEFQQVNDELAERIGEMLRLHKDNGKPIDLGIVLKDYLAQHPSTHHFDLARIVIDQAVRMGYSESDYQAIQPDWQAINDYGAKVQANVIDRY.

A leucine-zipper region spans residues 213–241 (LSETSNTLKELQDTLQAAGDELQTQILDI).

This sequence belongs to the MukF family. As to quaternary structure, interacts, and probably forms a ternary complex, with MukE and MukB via its C-terminal region. The complex formation is stimulated by calcium or magnesium. It is required for an interaction between MukE and MukB.

The protein localises to the cytoplasm. It localises to the nucleoid. Its function is as follows. Involved in chromosome condensation, segregation and cell cycle progression. May participate in facilitating chromosome segregation by condensation DNA from both sides of a centrally located replisome during cell division. Not required for mini-F plasmid partitioning. Probably acts via its interaction with MukB and MukE. Overexpression results in anucleate cells. It has a calcium binding activity. This is Chromosome partition protein MukF from Vibrio vulnificus (strain CMCP6).